We begin with the raw amino-acid sequence, 116 residues long: MSNIIKQIEQEQLKQNVPSFRPGDTLEVKVWVVEGSKRRLQAFEGVVIAIRHRGLHSAFTLRKISNGVGVERVFQTHSPIIDSITVKRKGAVRKAKLYYLRERSGKSARIKERLGN.

The protein belongs to the bacterial ribosomal protein bL19 family.

Functionally, this protein is located at the 30S-50S ribosomal subunit interface and may play a role in the structure and function of the aminoacyl-tRNA binding site. The chain is Large ribosomal subunit protein bL19 from Histophilus somni (strain 129Pt) (Haemophilus somnus).